The chain runs to 282 residues: Protease HtpX homolog (282 aa).

2 consecutive transmembrane segments (helical) span residues 6–26 (TLVLMVFLSVFFIFVGSLIGG) and 29–49 (GATFALIMALGMNFFAYFFSH). Position 130 (histidine 130) interacts with Zn(2+). The active site involves glutamate 131. A Zn(2+)-binding site is contributed by histidine 134. Helical transmembrane passes span 140–160 (ILISTIAATIAGAISYLAQMA) and 180–200 (IVALLMMIIAPLIAMIIQLAI). A Zn(2+)-binding site is contributed by glutamate 205.

It belongs to the peptidase M48B family. Zn(2+) is required as a cofactor.

The protein localises to the cell inner membrane. The sequence is that of Protease HtpX homolog from Thermodesulfovibrio yellowstonii (strain ATCC 51303 / DSM 11347 / YP87).